Consider the following 136-residue polypeptide: Translation initiation factor 5A (136 aa).

Lys-38 carries the hypusine modification.

It belongs to the eIF-5A family.

The protein resides in the cytoplasm. Functions by promoting the formation of the first peptide bond. The protein is Translation initiation factor 5A of Methanopyrus kandleri (strain AV19 / DSM 6324 / JCM 9639 / NBRC 100938).